A 316-amino-acid polypeptide reads, in one-letter code: 4-hydroxy-3-methylbut-2-enyl diphosphate reductase (316 aa).

Cysteine 12 contacts [4Fe-4S] cluster. (2E)-4-hydroxy-3-methylbut-2-enyl diphosphate contacts are provided by histidine 41 and histidine 74. The dimethylallyl diphosphate site is built by histidine 41 and histidine 74. Residues histidine 41 and histidine 74 each contribute to the isopentenyl diphosphate site. [4Fe-4S] cluster is bound at residue cysteine 96. Position 124 (histidine 124) interacts with (2E)-4-hydroxy-3-methylbut-2-enyl diphosphate. Histidine 124 contributes to the dimethylallyl diphosphate binding site. Residue histidine 124 coordinates isopentenyl diphosphate. The active-site Proton donor is the glutamate 126. Threonine 165 is a binding site for (2E)-4-hydroxy-3-methylbut-2-enyl diphosphate. Residue cysteine 195 coordinates [4Fe-4S] cluster. Positions 223, 224, 225, and 267 each coordinate (2E)-4-hydroxy-3-methylbut-2-enyl diphosphate. Dimethylallyl diphosphate is bound by residues serine 223, serine 224, asparagine 225, and serine 267. Residues serine 223, serine 224, asparagine 225, and serine 267 each coordinate isopentenyl diphosphate.

The protein belongs to the IspH family. Requires [4Fe-4S] cluster as cofactor.

It carries out the reaction isopentenyl diphosphate + 2 oxidized [2Fe-2S]-[ferredoxin] + H2O = (2E)-4-hydroxy-3-methylbut-2-enyl diphosphate + 2 reduced [2Fe-2S]-[ferredoxin] + 2 H(+). The catalysed reaction is dimethylallyl diphosphate + 2 oxidized [2Fe-2S]-[ferredoxin] + H2O = (2E)-4-hydroxy-3-methylbut-2-enyl diphosphate + 2 reduced [2Fe-2S]-[ferredoxin] + 2 H(+). It functions in the pathway isoprenoid biosynthesis; dimethylallyl diphosphate biosynthesis; dimethylallyl diphosphate from (2E)-4-hydroxy-3-methylbutenyl diphosphate: step 1/1. Its pathway is isoprenoid biosynthesis; isopentenyl diphosphate biosynthesis via DXP pathway; isopentenyl diphosphate from 1-deoxy-D-xylulose 5-phosphate: step 6/6. In terms of biological role, catalyzes the conversion of 1-hydroxy-2-methyl-2-(E)-butenyl 4-diphosphate (HMBPP) into a mixture of isopentenyl diphosphate (IPP) and dimethylallyl diphosphate (DMAPP). Acts in the terminal step of the DOXP/MEP pathway for isoprenoid precursor biosynthesis. The sequence is that of 4-hydroxy-3-methylbut-2-enyl diphosphate reductase from Acidithiobacillus ferrooxidans (strain ATCC 53993 / BNL-5-31) (Leptospirillum ferrooxidans (ATCC 53993)).